Reading from the N-terminus, the 564-residue chain is Probable cysteine--tRNA ligase, mitochondrial (564 aa).

C78 provides a ligand contact to Zn(2+). G79 provides a ligand contact to L-cysteine. A 'HIGH' region motif is present at residues 80–90 (PTVYDHAHLGH). T119 contacts L-cysteine. Residues 124 to 127 (KIIK) carry the 'KIIK' region motif. Residues C257, H282, and E286 each coordinate Zn(2+). H282 is a binding site for L-cysteine. Positions 317–321 (KMSKS) match the 'KMSKS' region motif. ATP is bound at residue K320.

Belongs to the class-I aminoacyl-tRNA synthetase family. The cofactor is Zn(2+).

It is found in the mitochondrion. The catalysed reaction is tRNA(Cys) + L-cysteine + ATP = L-cysteinyl-tRNA(Cys) + AMP + diphosphate. The enzyme catalyses 2 L-cysteine = S-sulfanyl-L-cysteine + L-alanine. It catalyses the reaction S-sulfanyl-L-cysteine + L-cysteine = S-disulfanyl-L-cysteine + L-alanine. It carries out the reaction S-sulfanyl-L-cysteine + tRNA(Cys) + ATP = (S)-sulfanyl-L-cysteinyl-tRNA(Cys) + AMP + diphosphate. The catalysed reaction is S-disulfanyl-L-cysteine + tRNA(Cys) + ATP = (S)-disulfanyl-L-cysteinyl-tRNA(Cys) + AMP + diphosphate. Functionally, mitochondrial cysteine-specific aminoacyl-tRNA synthetase that catalyzes the ATP-dependent ligation of cysteine to tRNA(Cys). Its function is as follows. In addition to its role as an aminoacyl-tRNA synthetase, has also cysteine persulfide synthase activity. Produces reactive persulfide species such as cysteine persulfide (CysSSH) from substrate cysteine and mediate direct incorporation of CysSSH into proteins during translations, resulting in protein persulfides and polysulfides. CysSSHs behave as potent antioxidants and cellular protectants. In Homo sapiens (Human), this protein is Probable cysteine--tRNA ligase, mitochondrial.